We begin with the raw amino-acid sequence, 152 residues long: Cell division protein SepF (152 aa).

Residues 25-54 (EEREPVQEEKGTKDKAAFQERPQTGKQNVV) are disordered. Positions 28–42 (EPVQEEKGTKDKAAF) are enriched in basic and acidic residues.

The protein belongs to the SepF family. In terms of assembly, homodimer. Interacts with FtsZ.

The protein localises to the cytoplasm. Functionally, cell division protein that is part of the divisome complex and is recruited early to the Z-ring. Probably stimulates Z-ring formation, perhaps through the cross-linking of FtsZ protofilaments. Its function overlaps with FtsA. The sequence is that of Cell division protein SepF from Bacillus pumilus (strain SAFR-032).